The sequence spans 393 residues: Seven-bladed beta-propeller protein Rv1057 (393 aa).

A disordered region spans residues 208-230; sequence DGGRIGSRSRSRQKSSKPRGNQA. A compositionally biased stretch (basic residues) spans 214-224; that stretch reads SRSRSRQKSSK.

May play an important role in host-pathogen interactions and in ESAT-6 secretion. This chain is Seven-bladed beta-propeller protein Rv1057, found in Mycobacterium tuberculosis (strain ATCC 25618 / H37Rv).